A 258-amino-acid chain; its full sequence is MSRTWIDIMADSKPDLPDNNKKYRISSKSGILSVLRVMIRNNSQATCYFGDAGSFFPTALLNLDSQRGEMVLDYGPNEEINQQALQVEKWNVVAFPNQVKVQFSCQQIGKTEFEGRNAFLAQIPTSLLRMQKREYYRVATPTTAPVKCVIPLLLGKSPSTVEVLLQDLSCGGMAVIDSNGRSNFEEGSVYENCCIVLPDIGTVNVSMRIIRVEPADTGFVHDLQSQRVSCEFADAGENALSLIQRYITRLELEQKRAS.

Positions 131–248 (QKREYYRVAT…ALSLIQRYIT (118 aa)) constitute a PilZ domain.

Belongs to the YcgR family. As to quaternary structure, monomer. Interacts with the flagellar basal bodies.

It is found in the bacterial flagellum basal body. Its function is as follows. Acts as a flagellar brake, regulating swimming and swarming in a bis-(3'-5') cyclic diguanylic acid (c-di-GMP)-dependent manner. Binds 1 c-di-GMP dimer per subunit. Increasing levels of c-di-GMP lead to decreased motility. In Nitrosospira multiformis (strain ATCC 25196 / NCIMB 11849 / C 71), this protein is Flagellar brake protein YcgR.